The chain runs to 480 residues: NADH-quinone oxidoreductase subunit N (480 aa).

13 helical membrane passes run 10–30 (FISI…ILIE), 40–60 (WSSL…WGGI), 80–100 (FFTV…TAFF), 117–137 (AVFG…FLGI), 166–186 (LMGS…YGAI), 208–228 (VLFF…AALV), 246–266 (TAFM…RLFF), 276–296 (WNQV…FVAL), 304–324 (FFAY…VIGN), 330–350 (ALTF…AVLA), 374–394 (LASL…TAGF), 409–431 (YYGL…LRII), and 452–472 (IVGT…APFL).

This sequence belongs to the complex I subunit 2 family. As to quaternary structure, NDH-1 is composed of 14 different subunits. Subunits NuoA, H, J, K, L, M, N constitute the membrane sector of the complex.

The protein localises to the cell inner membrane. The enzyme catalyses a quinone + NADH + 5 H(+)(in) = a quinol + NAD(+) + 4 H(+)(out). Functionally, NDH-1 shuttles electrons from NADH, via FMN and iron-sulfur (Fe-S) centers, to quinones in the respiratory chain. The immediate electron acceptor for the enzyme in this species is believed to be ubiquinone. Couples the redox reaction to proton translocation (for every two electrons transferred, four hydrogen ions are translocated across the cytoplasmic membrane), and thus conserves the redox energy in a proton gradient. The protein is NADH-quinone oxidoreductase subunit N of Protochlamydia amoebophila (strain UWE25).